The sequence spans 197 residues: Protein TIFY 9 (197 aa).

Over residues 57–73 (STGNNSDSSAKSRSVPS) the composition is skewed to polar residues. The interval 57 to 84 (STGNNSDSSAKSRSVPSTPREDQPQIPI) is disordered. One can recognise a Tify domain in the interval 98-132 (LVSGTVPMTIFYNGSVSVFQVSRNKAGEIMKVANE). Positions 168-193 (PIARRKSLQRFLEKRKERLVSTSPYY) match the Jas motif. Positions 170–177 (ARRKSLQR) match the Nuclear localization signal motif.

It belongs to the TIFY/JAZ family. As to quaternary structure, homo- and heterodimer. Interacts with MYC2, MYC3, MYC4, AFPH2/NINJA, TIFY10A/JAZ1, TIFY10B/JAZ2, TIFY6B/JAZ3, TIFY6A/JAZ4, TIFY11B/JAZ6, TIFY5A/JAZ8, TIFY7/JAZ9, TIFY3A/JAZ11 and TIFY3B/JAZ12. Isoform 1 and isoform 2 interact with COI1. Isoform 3 does not interact with COI1. Interacts with RHD6 and RSL1. Post-translationally, ubiquitinated. Targeted for degradation by the SCF(COI1) E3 ubiquitin ligase-proteasome pathway during jasmonate signaling.

The protein resides in the nucleus. Functionally, repressor of jasmonate (JA) responses that lacks the entire Jas domain and possesses severe JA insensitivity and resistance to JA-induced degradation. Acts as an endogenous repressor of JA signal output in JA-stimulated cells. Modulator of JA-controlled growth inhibition in response to wounding. Its function is as follows. Repressor of jasmonate (JA) responses that lacks part of the Jas domain and possesses JA insensitivity and partial resistance to JA-induced degradation. Repressor of jasmonate (JA) responses. Interacts with and suppresses RHD6 and RSL1 transcription factor activities to negatively regulate jasmonate-stimulated root hair development. The chain is Protein TIFY 9 (TIFY9) from Arabidopsis thaliana (Mouse-ear cress).